A 360-amino-acid polypeptide reads, in one-letter code: Phosphoserine aminotransferase (360 aa).

Arginine 42 contributes to the L-glutamate binding site. 4 residues coordinate pyridoxal 5'-phosphate: tryptophan 102, threonine 152, aspartate 171, and glutamine 194. Lysine 195 is subject to N6-(pyridoxal phosphate)lysine. Asparagine 237–threonine 238 lines the pyridoxal 5'-phosphate pocket.

It belongs to the class-V pyridoxal-phosphate-dependent aminotransferase family. SerC subfamily. As to quaternary structure, homodimer. The cofactor is pyridoxal 5'-phosphate.

The protein localises to the cytoplasm. The enzyme catalyses O-phospho-L-serine + 2-oxoglutarate = 3-phosphooxypyruvate + L-glutamate. It catalyses the reaction 4-(phosphooxy)-L-threonine + 2-oxoglutarate = (R)-3-hydroxy-2-oxo-4-phosphooxybutanoate + L-glutamate. It functions in the pathway amino-acid biosynthesis; L-serine biosynthesis; L-serine from 3-phospho-D-glycerate: step 2/3. Its pathway is cofactor biosynthesis; pyridoxine 5'-phosphate biosynthesis; pyridoxine 5'-phosphate from D-erythrose 4-phosphate: step 3/5. In terms of biological role, catalyzes the reversible conversion of 3-phosphohydroxypyruvate to phosphoserine and of 3-hydroxy-2-oxo-4-phosphonooxybutanoate to phosphohydroxythreonine. This is Phosphoserine aminotransferase from Coxiella burnetii (strain Dugway 5J108-111).